A 2025-amino-acid chain; its full sequence is E3 ubiquitin-protein ligase TRIP12 (2025 aa).

Polar residues predominate over residues 1 to 10 (MSNRPNNNPG). Positions 1 to 404 (MSNRPNNNPG…SGESESDDSE (404 aa)) are disordered. Position 2 is an N-acetylserine (Ser-2). Ser-12 carries the phosphoserine modification. A compositionally biased stretch (polar residues) spans 18-27 (RNTAGAQPQD). The segment covering 48–70 (DPDRANTSERQKTGQVPKKDNSR) has biased composition (basic and acidic residues). A phosphoserine mark is found at Ser-77, Ser-85, and Ser-100. The span at 78-88 (PDYNRTNSPSS) shows a compositional bias: polar residues. The segment covering 119 to 132 (EQQLKSAQLPSTSK) has biased composition (polar residues). 2 stretches are compositionally biased toward low complexity: residues 154–166 (SSCVKSGSGSEST) and 177–215 (KLASKSATSAKAGCSTITDSSSAASTSSSSSAIASASST). Lys-181 is subject to N6-acetyllysine. Over residues 280 to 290 (PGSSKSETSKP) the composition is skewed to polar residues. Residues Ser-310 and Ser-312 each carry the phosphoserine modification. Residues 326 to 338 (QKTTGSCASTSRR) show a composition bias toward polar residues. Residues 346–358 (GAAEARRQEKMAD) show a composition bias toward basic and acidic residues. Residues 360-371 (ESNQETVNSSAA) show a composition bias toward polar residues. The span at 379–397 (GAAASSSVAGAVGMTTSGE) shows a compositional bias: low complexity. Residues 755 to 869 (MLKKGNAQNT…DPELAKSFIK (115 aa)) form the WWE domain. Residues 970-1077 (ESLLTSPPKA…QSPKSSFLAS (108 aa)) are disordered. Ser-975 carries the post-translational modification Phosphoserine. The segment covering 983-1006 (GSGSLGSTTPASSGTATAATNASA) has biased composition (low complexity). 2 positions are modified to phosphoserine: Ser-1024 and Ser-1030. Over residues 1034–1047 (KRKRLPKRGPRRPK) the composition is skewed to basic residues. Phosphoserine is present on Ser-1049. The segment covering 1050-1059 (PPRDDDKVDN) has biased composition (basic and acidic residues). Residues 1062–1073 (KSPTTTQSPKSS) show a composition bias toward low complexity. Ser-1063, Ser-1350, Ser-1355, Ser-1362, and Ser-1409 each carry phosphoserine. A Phosphothreonine modification is found at Thr-1410. Disordered regions lie at residues 1441 to 1466 (TKDCVGGKRGRAQTAPTKTSPRNAKK) and 1601 to 1620 (TNPEINQSDSQDSRVAPRLD). Lys-1458 bears the N6-acetyllysine mark. Ser-1460 carries the phosphoserine modification. The K-box stretch occupies residues 1529–1603 (EIIPTSEFIN…AMQRLLDTNP (75 aa)). The HECT domain occupies 1918-2025 (PDHGYTHDSR…REGQQSFHLS (108 aa)). Cys-1992 serves as the catalytic Glycyl thioester intermediate.

This sequence belongs to the UPL family. K-HECT subfamily. In terms of assembly, interacts with MYC; leading to disrupt interaction with isoform p19ARF/ARF of CDKN2A. Interacts with TRADD; leading to disrupt interaction with isoform p19ARF/ARF of CDKN2A. Interacts with SMARCC1; leading to disrupt interaction with SMARCE1.

It is found in the nucleus. The protein resides in the nucleoplasm. It catalyses the reaction S-ubiquitinyl-[E2 ubiquitin-conjugating enzyme]-L-cysteine + [acceptor protein]-L-lysine = [E2 ubiquitin-conjugating enzyme]-L-cysteine + N(6)-ubiquitinyl-[acceptor protein]-L-lysine.. It functions in the pathway protein modification; protein ubiquitination. Functionally, E3 ubiquitin-protein ligase involved in ubiquitin fusion degradation (UFD) pathway and regulation of DNA repair. Part of the ubiquitin fusion degradation (UFD) pathway, a process that mediates ubiquitination of protein at their N-terminus, regardless of the presence of lysine residues in target proteins. Acts as a key regulator of DNA damage response by acting as a suppressor of RNF168, an E3 ubiquitin-protein ligase that promotes accumulation of 'Lys-63'-linked histone H2A and H2AX at DNA damage sites, thereby acting as a guard against excessive spreading of ubiquitinated chromatin at damaged chromosomes. In normal cells, mediates ubiquitination and degradation of isoform p19ARF/ARF of CDKN2A, a lysine-less tumor suppressor required for p53/TP53 activation under oncogenic stress. In cancer cells, however, isoform p19ARF/ARF and TRIP12 are located in different cell compartments, preventing isoform p19ARF/ARF ubiquitination and degradation. Does not mediate ubiquitination of isoform p16-INK4a of CDKN2A. Also catalyzes ubiquitination of NAE1 and SMARCE1, leading to their degradation. Ubiquitination and degradation of target proteins is regulated by interaction with proteins such as MYC, TRADD or SMARCC1, which disrupt the interaction between TRIP12 and target proteins. Mediates ubiquitination of ASXL1: following binding to N(6)-methyladenosine methylated DNA, ASXL1 is ubiquitinated by TRIP12, leading to its degradation and subsequent inactivation of the PR-DUB complex. This is E3 ubiquitin-protein ligase TRIP12 (Trip12) from Mus musculus (Mouse).